The primary structure comprises 240 residues: tRNA (guanine-N(1)-)-methyltransferase (240 aa).

S-adenosyl-L-methionine-binding positions include glycine 111 and 130–135 (IGDYVI).

Belongs to the RNA methyltransferase TrmD family. Homodimer.

It is found in the cytoplasm. The enzyme catalyses guanosine(37) in tRNA + S-adenosyl-L-methionine = N(1)-methylguanosine(37) in tRNA + S-adenosyl-L-homocysteine + H(+). Its function is as follows. Specifically methylates guanosine-37 in various tRNAs. The protein is tRNA (guanine-N(1)-)-methyltransferase of Mycoplasma capricolum subsp. capricolum (strain California kid / ATCC 27343 / NCTC 10154).